The primary structure comprises 299 residues: UDP-N-acetylenolpyruvoylglucosamine reductase (299 aa).

The 162-residue stretch at 31-192 folds into the FAD-binding PCMH-type domain; the sequence is VGGVAEVVFK…VDATFVGACG (162 aa). Residue Arg172 is part of the active site. The Proton donor role is filled by Ser221. Residue Glu291 is part of the active site.

It belongs to the MurB family. FAD is required as a cofactor.

The protein resides in the cytoplasm. It catalyses the reaction UDP-N-acetyl-alpha-D-muramate + NADP(+) = UDP-N-acetyl-3-O-(1-carboxyvinyl)-alpha-D-glucosamine + NADPH + H(+). It participates in cell wall biogenesis; peptidoglycan biosynthesis. Its function is as follows. Cell wall formation. In Anaplasma marginale (strain St. Maries), this protein is UDP-N-acetylenolpyruvoylglucosamine reductase.